The following is a 1188-amino-acid chain: Integrin alpha-11 (1188 aa).

The first 22 residues, 1-22, serve as a signal peptide directing secretion; that stretch reads MDLPRGLVVAWALSLWPGFTDT. Topologically, residues 23–1141 are extracellular; that stretch reads FNMDTRKPRV…ISKQEDWQVP (1119 aa). 2 FG-GAP repeats span residues 24 to 85 and 91 to 151; these read NMDT…NCTK and VTLS…FSKT. Residues cysteine 76 and cysteine 83 are joined by a disulfide bond. 2 N-linked (GlcNAc...) asparagine glycosylation sites follow: asparagine 82 and asparagine 95. 2 disulfides stabilise this stretch: cysteine 121/cysteine 139 and cysteine 129/cysteine 159. The 182-residue stretch at 164–345 folds into the VWFA domain; it reads DIVIVLDGSN…AALKDIVDAL (182 aa). 5 N-linked (GlcNAc...) asparagine glycosylation sites follow: asparagine 291, asparagine 331, asparagine 358, asparagine 449, and asparagine 462. FG-GAP repeat units lie at residues 355–406, 411–461, 462–527, 528–586, and 590–650; these read TNKN…VIPL, LKEF…TMHN, NRSL…LFVY, NGTL…SILK, and QRIT…FEPS. Ca(2+)-binding residues include aspartate 488, aspartate 490, aspartate 492, and aspartate 496. The N-linked (GlcNAc...) asparagine glycan is linked to asparagine 528. Ca(2+) contacts are provided by aspartate 551, asparagine 553, aspartate 555, aspartate 559, aspartate 613, asparagine 615, aspartate 617, and aspartate 621. N-linked (GlcNAc...) asparagine glycosylation occurs at asparagine 642. Cystine bridges form between cysteine 659–cysteine 668, cysteine 674–cysteine 729, and cysteine 781–cysteine 787. N-linked (GlcNAc...) asparagine glycosylation is present at asparagine 694. Asparagine 857 carries N-linked (GlcNAc...) asparagine glycosylation. Cysteine 881 and cysteine 893 are joined by a disulfide. N-linked (GlcNAc...) asparagine glycans are attached at residues asparagine 894, asparagine 973, asparagine 1031, asparagine 1039, and asparagine 1059. Residues 1142-1164 form a helical membrane-spanning segment; that stretch reads IWIIVGSTLGGLLLLALLVLALW. Over 1165 to 1188 the chain is Cytoplasmic; it reads KLGFFRSARRRREPGLDPTPKVLE.

The protein belongs to the integrin alpha chain family. Heterodimer of an alpha and a beta subunit. Alpha-11 associates with beta-1. Interacts with RAB21. According to PubMed:10464311, highest levels of expression in uterus and heart, intermediate levels in skeletal muscle and intermediate to low levels in pancreas, kidney and placenta. According to PubMed:10486209, also found in brain, colon, lung, small intestine, stomach, testis, salivary glands, thyroid glands and prostate. Very low levels in peripheral blood lymphocytes, fetal brain and fetal liver.

It is found in the membrane. In terms of biological role, integrin alpha-11/beta-1 is a receptor for collagen. In Homo sapiens (Human), this protein is Integrin alpha-11 (ITGA11).